The sequence spans 376 residues: MIYELFYPLKFHYGWLSWLNVLRYIPFRTIMATITAMVLTFVLAPWFIRELRRKQIGQVVRAEGPETHKIKAGTPTMGGALILLSLLLPTVLWADLRNPFVLATTAVTAGYGVIGYLDDFLKIKRRNSGGLPGRYKLIGQVLIGGAAVAYTFLLASKLPPDWAEIRTRLAIPFVAFSKYPIELPLYVYIPFAVFVVVATSNAVNLTDGLDGLAIGPVIINAGTYLILAYIVGASIASFSLATYLDIPAIASAGELSVYCGSVIGAGIGFLWYNTYPAQVFMGDVGSLALGGGLGMLAVFTKNELLSIILGGIFFIETVSVITQVLSFKLTGKRVFLMAPIHHHYEKKGWAEPKIIVRFWIISILLALVSLASMKLR.

10 helical membrane passes run 28–48, 76–96, 100–120, 135–155, 179–199, 211–231, 252–272, 279–299, 307–327, and 353–373; these read RTIMATITAMVLTFVLAPWFI, TMGGALILLSLLLPTVLWADL, FVLATTAVTAGYGVIGYLDDF, YKLIGQVLIGGAAVAYTFLLA, YPIELPLYVYIPFAVFVVVAT, GLAIGPVIINAGTYLILAYIV, AGELSVYCGSVIGAGIGFLWY, VFMGDVGSLALGGGLGMLAVF, IILGGIFFIETVSVITQVLSF, and KIIVRFWIISILLALVSLASM.

The protein belongs to the glycosyltransferase 4 family. MraY subfamily. The cofactor is Mg(2+).

It is found in the cell inner membrane. The catalysed reaction is UDP-N-acetyl-alpha-D-muramoyl-L-alanyl-gamma-D-glutamyl-meso-2,6-diaminopimeloyl-D-alanyl-D-alanine + di-trans,octa-cis-undecaprenyl phosphate = di-trans,octa-cis-undecaprenyl diphospho-N-acetyl-alpha-D-muramoyl-L-alanyl-D-glutamyl-meso-2,6-diaminopimeloyl-D-alanyl-D-alanine + UMP. It functions in the pathway cell wall biogenesis; peptidoglycan biosynthesis. Its function is as follows. Catalyzes the initial step of the lipid cycle reactions in the biosynthesis of the cell wall peptidoglycan: transfers peptidoglycan precursor phospho-MurNAc-pentapeptide from UDP-MurNAc-pentapeptide onto the lipid carrier undecaprenyl phosphate, yielding undecaprenyl-pyrophosphoryl-MurNAc-pentapeptide, known as lipid I. The chain is Phospho-N-acetylmuramoyl-pentapeptide-transferase from Sorangium cellulosum (strain So ce56) (Polyangium cellulosum (strain So ce56)).